The primary structure comprises 299 residues: Glycine--tRNA ligase alpha subunit (299 aa).

The protein belongs to the class-II aminoacyl-tRNA synthetase family. In terms of assembly, tetramer of two alpha and two beta subunits.

The protein localises to the cytoplasm. It carries out the reaction tRNA(Gly) + glycine + ATP = glycyl-tRNA(Gly) + AMP + diphosphate. The polypeptide is Glycine--tRNA ligase alpha subunit (Pediococcus pentosaceus (strain ATCC 25745 / CCUG 21536 / LMG 10740 / 183-1w)).